The sequence spans 180 residues: MTSTSQLFDPYAEALMAIAREQGLEDRFGEDAALFRSTLAASADLRHLLENPTLFSSQKKAVLNQVFGSSVHPLVLNFLNLLVDRNRIAFLDGIADRYQALLRKLRNVVRADVSSAVPLTEAQVQVITEKVKQLTGAAGVEIESQVDADLLGGVIIKVGSQVLDASLRGQLKRISISLAA.

Belongs to the ATPase delta chain family. In terms of assembly, F-type ATPases have 2 components, F(1) - the catalytic core - and F(0) - the membrane proton channel. F(1) has five subunits: alpha(3), beta(3), gamma(1), delta(1), epsilon(1). CF(0) has four main subunits: a(1), b(1), b'(1) and c(10-14). The alpha and beta chains form an alternating ring which encloses part of the gamma chain. F(1) is attached to F(0) by a central stalk formed by the gamma and epsilon chains, while a peripheral stalk is formed by the delta, b and b' chains.

It localises to the cellular thylakoid membrane. Its function is as follows. F(1)F(0) ATP synthase produces ATP from ADP in the presence of a proton or sodium gradient. F-type ATPases consist of two structural domains, F(1) containing the extramembraneous catalytic core and F(0) containing the membrane proton channel, linked together by a central stalk and a peripheral stalk. During catalysis, ATP synthesis in the catalytic domain of F(1) is coupled via a rotary mechanism of the central stalk subunits to proton translocation. This protein is part of the stalk that links CF(0) to CF(1). It either transmits conformational changes from CF(0) to CF(1) or is implicated in proton conduction. The polypeptide is ATP synthase subunit delta (Synechococcus elongatus (strain ATCC 33912 / PCC 7942 / FACHB-805) (Anacystis nidulans R2)).